The sequence spans 645 residues: Threonine--tRNA ligase (645 aa).

One can recognise a TGS domain in the interval 1 to 62 (MSIHITFPDG…VEDGSLEIVT (62 aa)). Positions 242–541 (DHRKLGKELD…LTEVYKGAFP (300 aa)) are catalytic. The Zn(2+) site is built by cysteine 336, histidine 387, and histidine 518.

Belongs to the class-II aminoacyl-tRNA synthetase family. Homodimer. Zn(2+) serves as cofactor.

The protein localises to the cytoplasm. It carries out the reaction tRNA(Thr) + L-threonine + ATP = L-threonyl-tRNA(Thr) + AMP + diphosphate + H(+). Catalyzes the attachment of threonine to tRNA(Thr) in a two-step reaction: L-threonine is first activated by ATP to form Thr-AMP and then transferred to the acceptor end of tRNA(Thr). Also edits incorrectly charged L-seryl-tRNA(Thr). This chain is Threonine--tRNA ligase, found in Enterococcus faecalis (strain ATCC 700802 / V583).